We begin with the raw amino-acid sequence, 152 residues long: Ribonuclease pancreatic beta-type (152 aa).

An N-terminal signal peptide occupies residues 1–25 (MGLXKSFALFSLLVLVLGWVQPSLS). The tract at residues 25-53 (SGESRESSADKFKRQHMDPDSPSKSSPTY) is disordered. Positions 27-45 (ESRESSADKFKRQHMDPDS) are enriched in basic and acidic residues. 2 residues coordinate substrate: lysine 35 and arginine 38. Histidine 40 serves as the catalytic Proton acceptor. 4 cysteine pairs are disulfide-bonded: cysteine 54–cysteine 112, cysteine 68–cysteine 123, cysteine 86–cysteine 138, and cysteine 93–cysteine 100. Substrate-binding positions include 69–73 (KRVNT) and lysine 94. Histidine 147 functions as the Proton donor in the catalytic mechanism.

It belongs to the pancreatic ribonuclease family. In terms of assembly, monomer.

Its subcellular location is the secreted. The enzyme catalyses an [RNA] containing cytidine + H2O = an [RNA]-3'-cytidine-3'-phosphate + a 5'-hydroxy-ribonucleotide-3'-[RNA].. It catalyses the reaction an [RNA] containing uridine + H2O = an [RNA]-3'-uridine-3'-phosphate + a 5'-hydroxy-ribonucleotide-3'-[RNA].. Endonuclease that catalyzes the cleavage of RNA on the 3' side of pyrimidine nucleotides. Acts on single-stranded and double-stranded RNA. This is Ribonuclease pancreatic beta-type from Rattus tiomanicus (Malayan field rat).